Consider the following 90-residue polypeptide: Acylphosphatase (90 aa).

The region spanning 4 to 90 (RMYVKVYGIV…KGEFNNFDTY (87 aa)) is the Acylphosphatase-like domain. Catalysis depends on residues Arg19 and Asn37.

This sequence belongs to the acylphosphatase family.

It catalyses the reaction an acyl phosphate + H2O = a carboxylate + phosphate + H(+). The sequence is that of Acylphosphatase (acyP) from Sulfurisphaera tokodaii (strain DSM 16993 / JCM 10545 / NBRC 100140 / 7) (Sulfolobus tokodaii).